Here is a 383-residue protein sequence, read N- to C-terminus: Processive diacylglycerol beta-glucosyltransferase (383 aa).

The protein belongs to the glycosyltransferase 28 family. UgtP subfamily.

It is found in the cell membrane. The enzyme catalyses a 1,2-diacyl-3-O-(beta-D-glucopyranosyl)-sn-glycerol + UDP-alpha-D-glucose = a 1,2-diacyl-3-O-(beta-D-Glc-(1-&gt;6)-beta-D-Glc)-sn-glycerol + UDP + H(+). It carries out the reaction a 1,2-diacyl-3-O-(beta-D-Glc-(1-&gt;6)-beta-D-Glc)-sn-glycerol + UDP-alpha-D-glucose = a 1,2-diacyl-3-O-(beta-D-Glc-(1-&gt;6)-beta-D-Glc-(1-&gt;6)-beta-D-Glc)-sn-glycerol + UDP + H(+). The catalysed reaction is a 1,2-diacyl-sn-glycerol + UDP-alpha-D-glucose = a 1,2-diacyl-3-O-(beta-D-glucopyranosyl)-sn-glycerol + UDP + H(+). The protein operates within glycolipid metabolism; diglucosyl-diacylglycerol biosynthesis. Its function is as follows. Processive glucosyltransferase involved in the biosynthesis of both the bilayer- and non-bilayer-forming membrane glucolipids. Is able to successively transfer up to three glucosyl residues to diacylglycerol (DAG), thereby catalyzing the formation of beta-monoglucosyl-DAG (3-O-(beta-D-glucopyranosyl)-1,2-diacyl-sn-glycerol), beta-diglucosyl-DAG (3-O-(beta-D-glucopyranosyl-beta-(1-&gt;6)-D-glucopyranosyl)-1,2-diacyl-sn-glycerol) and beta-triglucosyl-DAG (3-O-(beta-D-glucopyranosyl-beta-(1-&gt;6)-D-glucopyranosyl-beta-(1-&gt;6)-D-glucopyranosyl)-1,2-diacyl-sn-glycerol). Beta-diglucosyl-DAG is the predominant glycolipid found in Bacillales and is also used as a membrane anchor for lipoteichoic acid (LTA). The sequence is that of Processive diacylglycerol beta-glucosyltransferase from Bacillus pumilus (strain SAFR-032).